The primary structure comprises 199 residues: 7-methyl-GTP pyrophosphatase (199 aa).

The active-site Proton acceptor is aspartate 73.

This sequence belongs to the Maf family. YceF subfamily. Requires a divalent metal cation as cofactor.

The protein localises to the cytoplasm. The catalysed reaction is N(7)-methyl-GTP + H2O = N(7)-methyl-GMP + diphosphate + H(+). Functionally, nucleoside triphosphate pyrophosphatase that hydrolyzes 7-methyl-GTP (m(7)GTP). May have a dual role in cell division arrest and in preventing the incorporation of modified nucleotides into cellular nucleic acids. The polypeptide is 7-methyl-GTP pyrophosphatase (Bordetella pertussis (strain Tohama I / ATCC BAA-589 / NCTC 13251)).